Reading from the N-terminus, the 255-residue chain is Large ribosomal subunit protein uL4 (255 aa).

Belongs to the universal ribosomal protein uL4 family. Part of the 50S ribosomal subunit.

Functionally, one of the primary rRNA binding proteins, this protein initially binds near the 5'-end of the 23S rRNA. It is important during the early stages of 50S assembly. It makes multiple contacts with different domains of the 23S rRNA in the assembled 50S subunit and ribosome. Forms part of the polypeptide exit tunnel. This is Large ribosomal subunit protein uL4 from Pyrococcus abyssi (strain GE5 / Orsay).